A 579-amino-acid polypeptide reads, in one-letter code: Arginine--tRNA ligase (579 aa).

Positions 123–133 match the 'HIGH' region motif; the sequence is PNLAKEMHVGH.

Belongs to the class-I aminoacyl-tRNA synthetase family. In terms of assembly, monomer.

It localises to the cytoplasm. The enzyme catalyses tRNA(Arg) + L-arginine + ATP = L-arginyl-tRNA(Arg) + AMP + diphosphate. This Saccharophagus degradans (strain 2-40 / ATCC 43961 / DSM 17024) protein is Arginine--tRNA ligase.